We begin with the raw amino-acid sequence, 239 residues long: UPF0126 membrane protein VC_2382 (239 aa).

The next 6 helical transmembrane spans lie at 38-58, 62-82, 86-106, 122-142, 153-173, and 185-205; these read LLYL…VLLA, KMDP…GGTI, ALGA…VIMI, AWWI…GIGV, LIAI…RDVL, and VYAT…AMGY.

It belongs to the UPF0126 family.

The protein localises to the cell membrane. This is UPF0126 membrane protein VC_2382 from Vibrio cholerae serotype O1 (strain ATCC 39315 / El Tor Inaba N16961).